The primary structure comprises 479 residues: PRAME family member 19 (479 aa).

The stretch at 15–38 (QSLLRDQALAISVLDELPRELFPR) is one LRR 1 repeat. The stretch at 97–124 (RWKLQVLEMRDVDENFWTIWSGARPLSC) is one LRR 1; degenerate repeat. The LRR 2; degenerate repeat unit spans residues 179–203 (HLCCTKVVNYSMNILNFRNILETVY). An LRR 3; degenerate repeat occupies 204–230 (PDSIQVLEIWNMCWPCMVAEVSRYLSQ). An LRR 4; degenerate repeat occupies 231–265 (MKNLRKLFISDGCGYLPSFESQGQLVAEFSSVFLR). 5 LRR repeats span residues 266 to 291 (LEYLQMLYMRRIRFFEGYLDQLIRCL), 292 to 323 (KSPLETLALTYGSLDEEDLKCLPWYPSLSQLK), 324 to 342 (QLNLSHGTLRFIRLEPLRA), 348 to 375 (AATLQTLFLVDCGIGDSKLRVILPALSR), and 376 to 400 (CSNLTTFCFHGNDTSMDGLKDLLRH).

The protein belongs to the PRAME family.

The polypeptide is PRAME family member 19 (Homo sapiens (Human)).